A 608-amino-acid polypeptide reads, in one-letter code: Epsin-3 (608 aa).

Residues R8, K11, R25, N30, R63, and H73 each coordinate a 1,2-diacyl-sn-glycero-3-phospho-(1D-myo-inositol-4,5-bisphosphate). The ENTH domain maps to 12–144 (NIVHNYSEAE…KDEERLRQER (133 aa)). Disordered stretches follow at residues 150 to 266 (TKER…QSSI) and 281 to 475 (STHC…GPSA). Positions 174–189 (GSPSSYTSASSSPRYA) are enriched in low complexity. A phosphoserine mark is found at S184 and S185. The UIM domain occupies 202-221 (EEELQLQLALAMSREEAEKG). Basic and acidic residues-rich tracts occupy residues 214–229 (SREE…KGDD) and 240–260 (GQRR…EKLK). Tandem repeats lie at residues 287–289 (DPW), 310–312 (DPW), 337–339 (EPW), 353–355 (DPW), 370–372 (DPW), 495–497 (NPF), and 508–510 (NPF). Residues 287 to 372 (DPWDIPGLRP…KLPSTGVDPW (86 aa)) form a 5 X 3 AA repeats of [DE]-P-W region. Residues 346-363 (PSGPPITDPWAPSSPTPK) show a composition bias toward pro residues. The tract at residues 495–607 (NPFLTGLSAP…LPPQAGTNPF (113 aa)) is 3 X 3 AA repeats of N-P-F. Disordered stretches follow at residues 498-530 (LTGL…SPAL) and 575-608 (GAFA…NPFL). Pro residues predominate over residues 578–588 (APPPASLPQPL). Repeat 3 spans residues 605 to 607 (NPF).

The protein belongs to the epsin family.

It localises to the cytoplasm. The protein resides in the cell cortex. The protein localises to the perinuclear region. Its subcellular location is the cytoplasmic vesicle. It is found in the clathrin-coated vesicle. It localises to the nucleus. The chain is Epsin-3 (Epn3) from Rattus norvegicus (Rat).